We begin with the raw amino-acid sequence, 379 residues long: Probable protein arginine N-methyltransferase 6.1 (379 aa).

A disordered region spans residues 1 to 35 (MLPSHLNGHSPLARRRPRLSAASPPATGDSDAAAA). The segment covering 19 to 35 (LSAASPPATGDSDAAAA) has biased composition (low complexity). The SAM-dependent MTase PRMT-type domain maps to 45 to 379 (DRIYFQSYSH…FLNIQLDCTM (335 aa)). Histidine 58, arginine 67, glycine 91, glutamate 113, and glutamate 142 together coordinate S-adenosyl-L-methionine. Residues glutamate 156 and glutamate 165 contribute to the active site.

The protein belongs to the class I-like SAM-binding methyltransferase superfamily. Protein arginine N-methyltransferase family. PRMT6 subfamily.

In terms of biological role, arginine methyltransferase that can both catalyze the formation of omega-N monomethylarginine (MMA) and asymmetrical dimethylarginine (aDMA). This chain is Probable protein arginine N-methyltransferase 6.1 (PRMT6.1), found in Oryza sativa subsp. indica (Rice).